The primary structure comprises 655 residues: Broad substrate specificity ATP-binding cassette transporter ABCG2 (655 aa).

At 1–395 the chain is on the cytoplasmic side; it reads MSSNSYEVSI…KNLLGNPQAS (395 aa). In terms of domain architecture, ABC transporter spans 36–285; sequence LSFHNICYRV…FGAIGFRCEP (250 aa). Residues 79-86, 183-189, E210, and H242 each bind ATP; these read GPTGGGKS and RGVSGGE. An ABC transmembrane type-2 domain is found at 389–651; that stretch reads LGNPQASIAQ…TIAYLKLLFL (263 aa). The chain crosses the membrane as a helical span at residues 396-416; the sequence is IAQLIVTVFLGLVIGAIFYDL. The Extracellular segment spans residues 417–428; it reads KNDPAGIQNRAG. A helical transmembrane segment spans residues 429-449; sequence VLFFLTTNQCFSSVSAVELLV. The Cytoplasmic segment spans residues 450 to 477; that stretch reads VEKKLFIHEYISGYYRVSSYFFGKLLSD. Residues 478 to 498 traverse the membrane as a helical segment; the sequence is LLPMRMLPSIIFTCITYFLLG. Over 499–506 the chain is Extracellular; sequence LKPKVEAF. A helical membrane pass occupies residues 507-527; sequence FIMMLTLMMVAYSASSMALAI. The Cytoplasmic segment spans residues 528–535; that stretch reads AAGQSVVS. A helical membrane pass occupies residues 536-556; sequence IATLLMTISFVFMMIFSGLLV. Residues 557 to 630 are Extracellular-facing; the sequence is NLKTVVPWLS…ISPWGLWKNH (74 aa). The cysteines at positions 592 and 608 are disulfide-linked. Residues N596 and N600 are each glycosylated (N-linked (GlcNAc...) asparagine). A helical transmembrane segment spans residues 631 to 651; it reads VALACMIVIFLTIAYLKLLFL. Over 652-655 the chain is Cytoplasmic; sequence KKFS.

Belongs to the ABC transporter superfamily. ABCG family. Eye pigment precursor importer (TC 3.A.1.204) subfamily. Homodimer; disulfide-linked. The minimal functional unit is a homodimer, but the major oligomeric form in plasma membrane is a homotetramer with possibility of higher order oligomerization up to homododecamers. N-glycosylated. Glycosylation-deficient ABCG2 is normally expressed and functional. Post-translationally, phosphorylated. Phosphorylation may regulate the localization to the plasma membrane, the homooligomerization and therefore, the activity of the transporter.

Its subcellular location is the cell membrane. The protein localises to the apical cell membrane. The protein resides in the mitochondrion membrane. The catalysed reaction is ATP + H2O + xenobioticSide 1 = ADP + phosphate + xenobioticSide 2.. The enzyme catalyses urate(in) + ATP + H2O = urate(out) + ADP + phosphate + H(+). It carries out the reaction indoxyl sulfate(in) + ATP + H2O = indoxyl sulfate(out) + ADP + phosphate + H(+). It catalyses the reaction sphing-4-enine 1-phosphate(in) + ATP + H2O = sphing-4-enine 1-phosphate(out) + ADP + phosphate + H(+). The catalysed reaction is estrone 3-sulfate(in) + ATP + H2O = estrone 3-sulfate(out) + ADP + phosphate + H(+). The enzyme catalyses dehydroepiandrosterone 3-sulfate(in) + ATP + H2O = dehydroepiandrosterone 3-sulfate(out) + ADP + phosphate + H(+). It carries out the reaction 4-methylumbelliferone sulfate(in) + ATP + H2O = 4-methylumbelliferone sulfate(out) + ADP + phosphate + H(+). It catalyses the reaction 5,7-dimethyl-2-methylamino-4-(3-pyridylmethyl)-1,3-benzothiazol-6-yl beta-D-glucuronate(in) + ATP + H2O = 5,7-dimethyl-2-methylamino-4-(3-pyridylmethyl)-1,3-benzothiazol-6-yl beta-D-glucuronate(out) + ADP + phosphate + H(+). The catalysed reaction is 4-methylumbelliferone beta-D-glucuronate(in) + ATP + H2O = 4-methylumbelliferone beta-D-glucuronate(out) + ADP + phosphate + H(+). The enzyme catalyses 5,7-dimethyl-2-methylamino-4-(3-pyridylmethyl)-1,3-benzothiazol-6-yl sulfate(in) + ATP + H2O = 5,7-dimethyl-2-methylamino-4-(3-pyridylmethyl)-1,3-benzothiazol-6-yl sulfate(out) + ADP + phosphate + H(+). It carries out the reaction 17beta-estradiol 17-O-(beta-D-glucuronate)(in) + ATP + H2O = 17beta-estradiol 17-O-(beta-D-glucuronate)(out) + ADP + phosphate + H(+). It catalyses the reaction methotrexate(in) + ATP + H2O = methotrexate(out) + ADP + phosphate + H(+). The catalysed reaction is riboflavin(in) + ATP + H2O = riboflavin(out) + ADP + phosphate + H(+). The enzyme catalyses pheophorbide a(in) + ATP + H2O = pheophorbide a(out) + ADP + phosphate + H(+). It carries out the reaction itaconate(in) + ATP + H2O = itaconate(out) + ADP + phosphate + H(+). Broad substrate specificity ATP-dependent transporter of the ATP-binding cassette (ABC) family that actively extrudes a wide variety of physiological compounds, dietary toxins and xenobiotics from cells. Involved in porphyrin homeostasis, mediating the export of protoporphyrin IX (PPIX) from both mitochondria to cytosol and cytosol to extracellular space, it also functions in the cellular export of heme. Also mediates the efflux of sphingosine-1-P from cells. Acts as a urate exporter functioning in both renal and extrarenal urate excretion. In kidney, it also functions as a physiological exporter of the uremic toxin indoxyl sulfate. Also involved in the excretion of steroids like estrone 3-sulfate/E1S, 3beta-sulfooxy-androst-5-en-17-one/DHEAS, and other sulfate conjugates. Mediates the secretion of the riboflavin and biotin vitamins into milk. Extrudes pheophorbide a, a phototoxic porphyrin catabolite of chlorophyll, reducing its bioavailability. Plays an important role in the exclusion of xenobiotics from the brain. It confers to cells a resistance to multiple drugs and other xenobiotics including mitoxantrone, pheophorbide, camptothecin, methotrexate, azidothymidine, and the anthracyclines daunorubicin and doxorubicin, through the control of their efflux. In placenta, it limits the penetration of drugs from the maternal plasma into the fetus. May play a role in early stem cell self-renewal by blocking differentiation. In inflammatory macrophages, exports itaconate from the cytosol to the extracellular compartment and limits the activation of TFEB-dependent lysosome biogenesis involved in antibacterial innate immune response. The polypeptide is Broad substrate specificity ATP-binding cassette transporter ABCG2 (ABCG2) (Bos taurus (Bovine)).